Reading from the N-terminus, the 418-residue chain is 1-acylglycerol-3-phosphate O-acyltransferase (418 aa).

The region spanning 121–251 is the AB hydrolase-1 domain; that stretch reads PTLVMVHGYG…RATWKGAVLN (131 aa). Residues 197 to 201 carry the GXSXG motif; the sequence is GHSFG. The short motif at 379–384 is the HXXXXD motif element; it reads HFVFID.

It belongs to the peptidase S33 family. ABHD4/ABHD5 subfamily.

The protein localises to the cytoplasm. It carries out the reaction a 1-acyl-sn-glycero-3-phosphate + an acyl-CoA = a 1,2-diacyl-sn-glycero-3-phosphate + CoA. Lysophosphatidic acid acyltransferase which functions in phosphatidic acid biosynthesis. Is highly specific for lysophosphatidic acid and able to use different acyl-CoA donors. May regulate neutral lipid accumulation and participate in the regulation of lipid turnover in vegetative cells. Possesses additional triacylglycerol lipase and phospholipase A2 activities in vitro. Is not active as esterase or lysophospholipase. This chain is 1-acylglycerol-3-phosphate O-acyltransferase, found in Arabidopsis thaliana (Mouse-ear cress).